The sequence spans 157 residues: Cytochrome b6-f complex subunit 4 (157 aa).

A run of 3 helical transmembrane segments spans residues 35-55 (ILYI…GLGV), 94-114 (LVGV…AFIE), and 130-150 (LVYL…VLGI).

The protein belongs to the cytochrome b family. PetD subfamily. In terms of assembly, the 4 large subunits of the cytochrome b6-f complex are cytochrome b6, subunit IV (17 kDa polypeptide, petD), cytochrome f and the Rieske protein, while the 4 small subunits are petG, petL, petM and petN. The complex functions as a dimer.

The protein resides in the plastid. It localises to the chloroplast thylakoid membrane. Functionally, component of the cytochrome b6-f complex, which mediates electron transfer between photosystem II (PSII) and photosystem I (PSI), cyclic electron flow around PSI, and state transitions. The sequence is that of Cytochrome b6-f complex subunit 4 from Amphidinium carterae (Dinoflagellate).